The sequence spans 301 residues: Pyridoxal 5'-phosphate synthase subunit PdxS (301 aa).

A D-ribose 5-phosphate-binding site is contributed by Asp31. Catalysis depends on Lys88, which acts as the Schiff-base intermediate with D-ribose 5-phosphate. Residue Gly160 coordinates D-ribose 5-phosphate. Arg172 is a binding site for D-glyceraldehyde 3-phosphate. Residues Gly221 and 242–243 (GS) contribute to the D-ribose 5-phosphate site. The tract at residues 273-301 (EIAKSPGKGMKGQANETLPEEEKLQDRGI) is disordered. The segment covering 292-301 (EEEKLQDRGI) has biased composition (basic and acidic residues).

This sequence belongs to the PdxS/SNZ family. In the presence of PdxT, forms a dodecamer of heterodimers.

It carries out the reaction aldehydo-D-ribose 5-phosphate + D-glyceraldehyde 3-phosphate + L-glutamine = pyridoxal 5'-phosphate + L-glutamate + phosphate + 3 H2O + H(+). It participates in cofactor biosynthesis; pyridoxal 5'-phosphate biosynthesis. Catalyzes the formation of pyridoxal 5'-phosphate from ribose 5-phosphate (RBP), glyceraldehyde 3-phosphate (G3P) and ammonia. The ammonia is provided by the PdxT subunit. Can also use ribulose 5-phosphate and dihydroxyacetone phosphate as substrates, resulting from enzyme-catalyzed isomerization of RBP and G3P, respectively. In Natronomonas pharaonis (strain ATCC 35678 / DSM 2160 / CIP 103997 / JCM 8858 / NBRC 14720 / NCIMB 2260 / Gabara) (Halobacterium pharaonis), this protein is Pyridoxal 5'-phosphate synthase subunit PdxS.